Here is a 359-residue protein sequence, read N- to C-terminus: MQTLADLLNTIPAIDPAAMSRAQRHIDGLLKPVGSLGRLEALAIQLAGMPGLNGIPHVGKKAVLVMCADHGVWEEGVAISPKEVTAIQAENMTRGTTGVCVLAAQAGANVHVVDVGIDSAEPIPGLINMRVARGSGNIASAPAMSRRQAEKLLLDVICYTRELAKNGVTLFGVGELGMANTTPAAAIVSTITGRDPEEVVGIGANLPTDKLANKIDVVRRAITLNQPNPQDGIDVLAKVGGFDLVGIAGVMLGAASCGLPVLLDGFLSYAAALAACQMSPAIKPYLIPSHLSVEKGARIALSHLGLEPYLNMDMRLGEGSGAALAMPIIEAACAIYNNMGELAASNIVLPGNTTSDLNS.

Catalysis depends on Glu-318, which acts as the Proton acceptor.

It belongs to the CobT family. Homodimer.

It carries out the reaction 5,6-dimethylbenzimidazole + nicotinate beta-D-ribonucleotide = alpha-ribazole 5'-phosphate + nicotinate + H(+). It participates in nucleoside biosynthesis; alpha-ribazole biosynthesis; alpha-ribazole from 5,6-dimethylbenzimidazole: step 1/2. In terms of biological role, catalyzes the synthesis of alpha-ribazole-5'-phosphate from nicotinate mononucleotide (NAMN) and 5,6-dimethylbenzimidazole (DMB). This chain is Nicotinate-nucleotide--dimethylbenzimidazole phosphoribosyltransferase, found in Escherichia coli O9:H4 (strain HS).